The following is a 173-amino-acid chain: NADH-ubiquinone oxidoreductase chain 6 (173 aa).

Transmembrane regions (helical) follow at residues 1–21 (MTYF…AVAS), 27–47 (YGVV…LSLG), 48–68 (VSFV…VVFV), 87–107 (VVGY…VGGL), and 139–159 (CGVG…FVVL).

It belongs to the complex I subunit 6 family.

The protein resides in the mitochondrion membrane. The enzyme catalyses a ubiquinone + NADH + 5 H(+)(in) = a ubiquinol + NAD(+) + 4 H(+)(out). Its function is as follows. Core subunit of the mitochondrial membrane respiratory chain NADH dehydrogenase (Complex I) that is believed to belong to the minimal assembly required for catalysis. Complex I functions in the transfer of electrons from NADH to the respiratory chain. The immediate electron acceptor for the enzyme is believed to be ubiquinone. This is NADH-ubiquinone oxidoreductase chain 6 (MT-ND6) from Synthliboramphus wumizusume (Japanese murrelet).